Here is a 122-residue protein sequence, read N- to C-terminus: uncharacterized protein (122 aa).

The N-terminal stretch at Met1–Ala22 is a signal peptide.

This is an uncharacterized protein from Escherichia coli (strain K12).